The primary structure comprises 202 residues: Ribonuclease HII (202 aa).

Residues 18–202 (GQYAGVDEVG…KSFRPVREAM (185 aa)) form the RNase H type-2 domain. Positions 24, 25, and 116 each coordinate a divalent metal cation.

This sequence belongs to the RNase HII family. Requires Mn(2+) as cofactor. Mg(2+) serves as cofactor.

The protein resides in the cytoplasm. The enzyme catalyses Endonucleolytic cleavage to 5'-phosphomonoester.. In terms of biological role, endonuclease that specifically degrades the RNA of RNA-DNA hybrids. In Shewanella piezotolerans (strain WP3 / JCM 13877), this protein is Ribonuclease HII.